The sequence spans 428 residues: Serine--tRNA ligase (428 aa).

An L-serine-binding site is contributed by 235-237 (TAE). 266–268 (RSE) lines the ATP pocket. Glu289 contributes to the L-serine binding site. Position 353–356 (353–356 (EISS)) interacts with ATP. An L-serine-binding site is contributed by Ser389.

It belongs to the class-II aminoacyl-tRNA synthetase family. Type-1 seryl-tRNA synthetase subfamily. As to quaternary structure, homodimer. The tRNA molecule binds across the dimer.

Its subcellular location is the cytoplasm. It carries out the reaction tRNA(Ser) + L-serine + ATP = L-seryl-tRNA(Ser) + AMP + diphosphate + H(+). The enzyme catalyses tRNA(Sec) + L-serine + ATP = L-seryl-tRNA(Sec) + AMP + diphosphate + H(+). The protein operates within aminoacyl-tRNA biosynthesis; selenocysteinyl-tRNA(Sec) biosynthesis; L-seryl-tRNA(Sec) from L-serine and tRNA(Sec): step 1/1. Its function is as follows. Catalyzes the attachment of serine to tRNA(Ser). Is also able to aminoacylate tRNA(Sec) with serine, to form the misacylated tRNA L-seryl-tRNA(Sec), which will be further converted into selenocysteinyl-tRNA(Sec). The polypeptide is Serine--tRNA ligase (Shewanella sp. (strain ANA-3)).